The chain runs to 612 residues: Chaperone protein DnaK (612 aa).

Thr-174 is modified (phosphothreonine; by autocatalysis). The disordered stretch occupies residues Gly-578–Lys-612. The segment covering Asn-586–Asn-598 has biased composition (polar residues).

Belongs to the heat shock protein 70 family.

Functionally, acts as a chaperone. This chain is Chaperone protein DnaK, found in Thermoanaerobacter sp. (strain X514).